We begin with the raw amino-acid sequence, 251 residues long: uncharacterized protein (251 aa).

A signal peptide spans 1 to 18 (MRILIILSIILCSLSIRA).

It belongs to the MlaA family.

This is an uncharacterized protein from Rickettsia conorii (strain ATCC VR-613 / Malish 7).